The following is a 359-amino-acid chain: 3-dehydroquinate synthase (359 aa).

NAD(+)-binding positions include 71–76 (DGEQYK), 105–109 (GVIGD), 129–130 (TT), lysine 142, lysine 151, and 169–172 (CLST). Zn(2+)-binding residues include glutamate 184, histidine 247, and histidine 264.

Belongs to the sugar phosphate cyclases superfamily. Dehydroquinate synthase family. It depends on Co(2+) as a cofactor. Requires Zn(2+) as cofactor. NAD(+) serves as cofactor.

Its subcellular location is the cytoplasm. It carries out the reaction 7-phospho-2-dehydro-3-deoxy-D-arabino-heptonate = 3-dehydroquinate + phosphate. It participates in metabolic intermediate biosynthesis; chorismate biosynthesis; chorismate from D-erythrose 4-phosphate and phosphoenolpyruvate: step 2/7. Its function is as follows. Catalyzes the conversion of 3-deoxy-D-arabino-heptulosonate 7-phosphate (DAHP) to dehydroquinate (DHQ). This is 3-dehydroquinate synthase from Shewanella piezotolerans (strain WP3 / JCM 13877).